The sequence spans 235 residues: Glycerol-3-phosphate acyltransferase (235 aa).

6 helical membrane-spanning segments follow: residues 4 to 24, 56 to 76, 94 to 114, 126 to 146, 152 to 172, and 194 to 214; these read LLAI…IMAG, TVTL…VAFF, LLAG…GFKG, IGIA…TVWF, VASI…KYVF, and SLDY…LFTH.

This sequence belongs to the PlsY family. As to quaternary structure, probably interacts with PlsX.

Its subcellular location is the cell inner membrane. The catalysed reaction is an acyl phosphate + sn-glycerol 3-phosphate = a 1-acyl-sn-glycero-3-phosphate + phosphate. It functions in the pathway lipid metabolism; phospholipid metabolism. Its function is as follows. Catalyzes the transfer of an acyl group from acyl-phosphate (acyl-PO(4)) to glycerol-3-phosphate (G3P) to form lysophosphatidic acid (LPA). This enzyme utilizes acyl-phosphate as fatty acyl donor, but not acyl-CoA or acyl-ACP. This chain is Glycerol-3-phosphate acyltransferase, found in Chlorobium phaeovibrioides (strain DSM 265 / 1930) (Prosthecochloris vibrioformis (strain DSM 265)).